Here is a 71-residue protein sequence, read N- to C-terminus: Disintegrin viridin (71 aa).

The Disintegrin domain occupies 1–71 (AGEECDCGSP…SADCPRNRFH (71 aa)). Intrachain disulfides connect cysteine 5–cysteine 20, cysteine 7–cysteine 15, cysteine 14–cysteine 37, cysteine 28–cysteine 34, cysteine 33–cysteine 58, and cysteine 46–cysteine 65. The short motif at 50 to 52 (RGD) is the Cell attachment site element. The tract at residues 50–71 (RGDNPDDRCTGQSADCPRNRFH) is disordered.

It belongs to the venom metalloproteinase (M12B) family. P-II subfamily. P-IIa sub-subfamily. Monomer (disintegrin). Expressed by the venom gland.

Its subcellular location is the secreted. In terms of biological role, inhibits fibrinogen interaction with platelets. Acts by binding to alpha-IIb/beta-3 (ITGA2B/ITGB3) on the platelet surface and inhibits aggregation induced by ADP, thrombin, platelet-activating factor and collagen. This is Disintegrin viridin from Crotalus viridis viridis (Prairie rattlesnake).